Here is a 465-residue protein sequence, read N- to C-terminus: Lysophospholipid acyltransferase 2 (465 aa).

9 helical membrane passes run 15 to 35 (VSVAVLRFLLCFVATIPISFL), 55 to 75 (FLSYLSFGFSSNLHFLVPMTI), 86 to 106 (LSGFITFFLGFAYLIGCHVFY), 161 to 181 (SLIEYFGYCLCCGSHFAGPVF), 214 to 234 (AVFQAAICMALYLYLVPQFPL), 266 to 286 (YFIWSISEASIIISGLGFSGW), 356 to 376 (AVWHGLYPGYIIFFVQSALMI), 399 to 419 (VLVLINFLYTVVVLNYSSVGF), and 434 to 454 (VYYIGTVIPIAVLLLSYLVPV). His359 is an active-site residue.

The protein belongs to the membrane-bound acyltransferase family. As to quaternary structure, interacts with GPAT9 and DGAT1. In terms of tissue distribution, expressed in rosette leaves, pollen grains, developing embryos and developing seeds.

The protein resides in the endoplasmic reticulum membrane. It catalyses the reaction a 1-acyl-sn-glycero-3-phosphocholine + an acyl-CoA = a 1,2-diacyl-sn-glycero-3-phosphocholine + CoA. The enzyme catalyses 1-(9Z-octadecenoyl)-sn-glycero-3-phosphocholine + (9Z)-octadecenoyl-CoA = 1,2-di-(9Z-octadecenoyl)-sn-glycero-3-phosphocholine + CoA. The catalysed reaction is 1-(9Z-octadecenoyl)-sn-glycero-3-phosphocholine + (9Z,12Z)-octadecadienoyl-CoA = 1-(9Z)-octadecenoyl-2-(9Z,12Z)-octadecadienoyl-sn-glycero-3-phosphocholine + CoA. It carries out the reaction (9Z,12Z,15Z)-octadecatrienoyl-CoA + 1-(9Z-octadecenoyl)-sn-glycero-3-phosphocholine = 1-(9Z-octadecaenoyl)-2-(9Z,12Z,15Z-octadecatrienoyl)-sn-glycero-3-phosphocholine + CoA. It catalyses the reaction a 1-acyl-sn-glycero-3-phosphoethanolamine + an acyl-CoA = a 1,2-diacyl-sn-glycero-3-phosphoethanolamine + CoA. The enzyme catalyses a 1-acyl-sn-glycero-3-phospho-L-serine + an acyl-CoA = a 1,2-diacyl-sn-glycero-3-phospho-L-serine + CoA. In terms of biological role, lysophospholipid acyltransferase with broad specificity. Mediates the conversion of lysophosphatidylethanolamine (1-acyl-sn-glycero-3-phosphoethanolamine or LPE) into phosphatidylethanolamine (1,2-diacyl-sn-glycero-3-phosphoethanolamine or PE) (LPEAT activity). Catalyzes the acylation of lysophosphatidylserine (1-acyl-2-hydroxy-sn-glycero-3-phospho-L-serine or LPS) into phosphatidylserine (1,2-diacyl-sn-glycero-3-phospho-L-serine or PS) (LPSAT activity). Can convert lysophosphatidylcholine (1-acyl-sn-glycero-3-phosphocholine or LPC) into phosphatidylcholine (1,2-diacyl-sn-glycero-3-phosphocholine or PC) (LPCAT activity). Exhibits preference for C18-unsaturated acyl-CoA when transferring an acyl group to lysophosphatidylcholine. Can also utilize lysophosphatidylglycerol (LPG) as substrate in vitro. Has neither activity towards lysophosphatidic acid (LPA) nor lysophosphatidylinositol (LPI). Lysophospholipid acyltransferases catalyze the reacylation step of the phospholipid remodeling pathway also known as the Lands cycle. The primary function of the Lands cycle is to provide a route for acyl remodeling to modify fatty acid (FA) composition of phospholipids derived from the Kennedy pathway. Is involved in PC acyl editing and phosphocholine headgroup exchange between PC and diacylglycerols. This processes control the majority of acyl fluxes through PC to provide polyunsaturated fatty acids for triacylglycerols synthesis in seeds. Involved with LPCAT1 in the direct incorporation of newly synthesized fatty acids exported form the chloroplast into PC through acyl editing. This is Lysophospholipid acyltransferase 2 from Arabidopsis thaliana (Mouse-ear cress).